A 264-amino-acid polypeptide reads, in one-letter code: SPRY domain-containing SOCS box protein 2 (264 aa).

Polar residues predominate over residues 1 to 18; that stretch reads MGQTALARGSSSTPSSHA. The interval 1–53 is disordered; that stretch reads MGQTALARGSSSTPSSHALYSDLSPPEGLEELLSAPPPDLGAQRHHGWNPKDC. Low complexity predominate over residues 21–34; that stretch reads SDLSPPEGLEELLS. One can recognise a B30.2/SPRY domain in the interval 26–221; that stretch reads PEGLEELLSA…VRIRYLGERR (196 aa). The region spanning 222–264 is the SOCS box domain; the sequence is AEEPQSLLHLSRLCVRHALGDTRLGQISSLPLPPAMKRYLLYK.

This sequence belongs to the SPSB family. Component of the probable ECS(SPSB2) E3 ubiquitin-protein ligase complex which contains CUL5, RNF7/RBX2, Elongin BC complex and SPSB2. Interacts with CUL5, RNF7, ELOB and ELOC. Interacts with MET. Interacts (via B30.2/SPRY domain) with PAWR; this interaction occurs in association with the Elongin BC complex. Interacts with NOS2.

It localises to the cytoplasm. Its subcellular location is the cytosol. It functions in the pathway protein modification; protein ubiquitination. Its function is as follows. Substrate recognition component of a SCF-like ECS (Elongin BC-CUL2/5-SOCS-box protein) E3 ubiquitin-protein ligase complex which mediates the ubiquitination and subsequent proteasomal degradation of target proteins. Negatively regulates nitric oxide (NO) production and limits cellular toxicity in activated macrophages by mediating the ubiquitination and proteasomal degradation of NOS2. Acts as a bridge which links NOS2 with the ECS E3 ubiquitin ligase complex components ELOC and CUL5. This is SPRY domain-containing SOCS box protein 2 (Spsb2) from Rattus norvegicus (Rat).